The sequence spans 316 residues: tRNA dimethylallyltransferase (316 aa).

Residue Gly-17–Thr-24 participates in ATP binding. Residue Thr-19 to Thr-24 coordinates substrate. Interaction with substrate tRNA regions lie at residues Asp-42–Leu-45, Gln-166–Arg-170, Arg-247–Arg-252, and Lys-280–Arg-287.

It belongs to the IPP transferase family. As to quaternary structure, monomer. It depends on Mg(2+) as a cofactor.

The enzyme catalyses adenosine(37) in tRNA + dimethylallyl diphosphate = N(6)-dimethylallyladenosine(37) in tRNA + diphosphate. Functionally, catalyzes the transfer of a dimethylallyl group onto the adenine at position 37 in tRNAs that read codons beginning with uridine, leading to the formation of N6-(dimethylallyl)adenosine (i(6)A). This chain is tRNA dimethylallyltransferase, found in Escherichia coli O81 (strain ED1a).